The following is a 64-amino-acid chain: uncharacterized protein (64 aa).

This is an uncharacterized protein from Sulfolobus islandicus rod-shaped virus 1 (SIRV-1).